Here is a 152-residue protein sequence, read N- to C-terminus: Transcriptional repressor NrdR (152 aa).

A zinc finger spans residues Cys3 to Cys34. The ATP-cone domain maps to Ile49–Glu139.

It belongs to the NrdR family. Zn(2+) serves as cofactor.

Its function is as follows. Negatively regulates transcription of bacterial ribonucleotide reductase nrd genes and operons by binding to NrdR-boxes. This Opitutus terrae (strain DSM 11246 / JCM 15787 / PB90-1) protein is Transcriptional repressor NrdR.